The primary structure comprises 486 residues: N-succinylglutamate 5-semialdehyde dehydrogenase (486 aa).

220–225 (GSSRTG) is an NAD(+) binding site. Catalysis depends on residues E243 and C277.

This sequence belongs to the aldehyde dehydrogenase family. AstD subfamily.

It catalyses the reaction N-succinyl-L-glutamate 5-semialdehyde + NAD(+) + H2O = N-succinyl-L-glutamate + NADH + 2 H(+). It participates in amino-acid degradation; L-arginine degradation via AST pathway; L-glutamate and succinate from L-arginine: step 4/5. Its function is as follows. Catalyzes the NAD-dependent reduction of succinylglutamate semialdehyde into succinylglutamate. The polypeptide is N-succinylglutamate 5-semialdehyde dehydrogenase (Shewanella sediminis (strain HAW-EB3)).